A 143-amino-acid polypeptide reads, in one-letter code: FAD synthase (143 aa).

Residues 9–10, 14–17, and aspartate 92 each bind ATP; these read TF and HPGH.

This sequence belongs to the archaeal FAD synthase family. In terms of assembly, homodimer. A divalent metal cation is required as a cofactor.

It carries out the reaction FMN + ATP + H(+) = FAD + diphosphate. Its pathway is cofactor biosynthesis; FAD biosynthesis; FAD from FMN: step 1/1. Catalyzes the transfer of the AMP portion of ATP to flavin mononucleotide (FMN) to produce flavin adenine dinucleotide (FAD) coenzyme. The sequence is that of FAD synthase from Methanococcoides burtonii (strain DSM 6242 / NBRC 107633 / OCM 468 / ACE-M).